Consider the following 157-residue polypeptide: MAETADTINTTVSTPQPQLESRSDETSCLQKHRSDATSEVTKEEKSGGILFSVWPPCQKSRDYVVNSMIKTLSTDSILSYKYGTIKPEEASAVAKSIEEKAYDIASRFVSSDGIKNLEVYGIETSERMIESAEVRFKANGSMELLLNQTIKMMQLLI.

Positions 1–20 (MAETADTINTTVSTPQPQLE) are enriched in polar residues. The disordered stretch occupies residues 1–41 (MAETADTINTTVSTPQPQLESRSDETSCLQKHRSDATSEVT). Basic and acidic residues predominate over residues 32–41 (HRSDATSEVT). The WPP; degenerate stretch occupies residues 37–138 (TSEVTKEEKS…IESAEVRFKA (102 aa)).

As to expression, expressed in roots, stems and leaves.

The protein resides in the cytoplasm. The protein localises to the nucleus. In terms of biological role, regulates the mitotic activity in roots. The chain is WPP domain-containing protein 3 (WPP3) from Arabidopsis thaliana (Mouse-ear cress).